The primary structure comprises 232 residues: Succinyl-CoA:3-ketoacid coenzyme A transferase subunit A (232 aa).

Residue 24–30 (GGFGLCG) participates in CoA binding.

The protein belongs to the 3-oxoacid CoA-transferase subunit A family. Heterodimer of a subunit A and a subunit B.

It catalyses the reaction a 3-oxo acid + succinyl-CoA = a 3-oxoacyl-CoA + succinate. In Helicobacter pylori (strain ATCC 700392 / 26695) (Campylobacter pylori), this protein is Succinyl-CoA:3-ketoacid coenzyme A transferase subunit A (scoA).